Consider the following 363-residue polypeptide: Cysteine proteinase 15A (363 aa).

The first 18 residues, 1–18 (MDRRFLFALFLFAAVATA), serve as a signal peptide directing secretion. Positions 19 to 131 (VTDDTNNDDF…QKAPILPTTN (113 aa)) are cleaved as a propeptide — activation peptide. 2 cysteine pairs are disulfide-bonded: cysteine 153-cysteine 203 and cysteine 187-cysteine 236. Cysteine 156 is a catalytic residue. N-linked (GlcNAc...) asparagine glycosylation is present at asparagine 249. Cysteine 292 and cysteine 347 are oxidised to a cystine. Residues histidine 299 and asparagine 326 contribute to the active site.

The protein belongs to the peptidase C1 family.

This chain is Cysteine proteinase 15A, found in Pisum sativum (Garden pea).